Reading from the N-terminus, the 488-residue chain is Galactose-1-phosphate uridylyltransferase (488 aa).

The protein belongs to the galactose-1-phosphate uridylyltransferase type 2 family.

It is found in the cytoplasm. The catalysed reaction is alpha-D-galactose 1-phosphate + UDP-alpha-D-glucose = alpha-D-glucose 1-phosphate + UDP-alpha-D-galactose. It functions in the pathway carbohydrate metabolism; galactose metabolism. The sequence is that of Galactose-1-phosphate uridylyltransferase (galT) from Lactobacillus helveticus (Lactobacillus suntoryeus).